Here is a 712-residue protein sequence, read N- to C-terminus: 3',5'-cyclic-AMP phosphodiesterase 4C (712 aa).

2 disordered regions span residues 1–31 (MENL…APKH) and 45–64 (RFYS…LSPR). The segment covering 17–31 (SRSRGRHSMTRAPKH) has biased composition (basic residues). Over residues 48–64 (SDPDKSAGCRERDLSPR) the composition is skewed to basic and acidic residues. The residue at position 73 (Ser73) is a Phosphoserine. The interval 181–200 (AKQGPVGNPSSSNQLPPAED) is disordered. Residues 312 to 641 (VQTDQEEQLA…EWYQSKIPRS (330 aa)) form the PDEase domain. His388 (proton donor) is an active-site residue. A 3',5'-cyclic AMP-binding site is contributed by His388. AMP-binding residues include His388 and His392. Zn(2+)-binding residues include His392, His428, Asp429, and Asp546. AMP-binding residues include Asp429, Asp546, Gln597, and Phe600. Residue Asp429 coordinates Mg(2+). A Mn(2+)-binding site is contributed by Asp429. Residues Gln597 and Phe600 each contribute to the 3',5'-cyclic AMP site. Disordered stretches follow at residues 636–655 (SKIP…GPDR) and 664–712 (EAEE…NQRT). The residue at position 641 (Ser641) is a Phosphoserine. The span at 664–678 (EAEEEDEEEEEEGEE) shows a compositional bias: acidic residues.

It belongs to the cyclic nucleotide phosphodiesterase family. PDE4 subfamily. Part of a complex containing AKAP5, ADCY5, ADCY6 and PKD2. Zn(2+) serves as cofactor. It depends on Mg(2+) as a cofactor. Mn(2+) is required as a cofactor. In terms of tissue distribution, expressed in various tissues but not in cells of the immune system.

It is found in the cell projection. Its subcellular location is the cilium. It catalyses the reaction 3',5'-cyclic AMP + H2O = AMP + H(+). It participates in purine metabolism; 3',5'-cyclic AMP degradation; AMP from 3',5'-cyclic AMP: step 1/1. Inhibited by rolipram. In terms of biological role, hydrolyzes the second messenger cAMP, which is a key regulator of many important physiological processes. This chain is 3',5'-cyclic-AMP phosphodiesterase 4C, found in Homo sapiens (Human).